Consider the following 586-residue polypeptide: Methionine--tRNA ligase, mitochondrial (586 aa).

The N-terminal 46 residues, 1–46, are a transit peptide targeting the mitochondrion; the sequence is MLRQCARWVLTRTRFGRGCRRYGSCSPSASGDAGEARAYFTTPIFY. The short motif at 45–55 is the 'HIGH' region element; sequence FYVNAAPHIGH. The 'KMSKS' region motif lies at 340–344; the sequence is KMSKS. Residue lysine 343 participates in ATP binding.

It belongs to the class-I aminoacyl-tRNA synthetase family.

It localises to the mitochondrion matrix. It catalyses the reaction tRNA(Met) + L-methionine + ATP = L-methionyl-tRNA(Met) + AMP + diphosphate. This Mus musculus (Mouse) protein is Methionine--tRNA ligase, mitochondrial (Mars2).